Here is a 340-residue protein sequence, read N- to C-terminus: Protein-tyrosine-phosphatase PTP1 (340 aa).

One can recognise a Tyrosine-protein phosphatase domain in the interval 58–326 (IAHEFTGLQA…FFCYNAIVDE (269 aa)). Substrate contacts are provided by residues Asp234, 265 to 271 (CSAGIGR), and Gln311. Cys265 (phosphocysteine intermediate) is an active-site residue.

As to quaternary structure, interacts with MPK6. Interacts with KIN10. In terms of processing, phosphorylated by KIN10. In terms of tissue distribution, expressed in roots, stems and flowers, and at low levels in leaves.

The protein localises to the cytoplasm. It localises to the cytosol. The protein resides in the nucleus. It catalyses the reaction O-phospho-L-tyrosyl-[protein] + H2O = L-tyrosyl-[protein] + phosphate. Inhibited by hydrogen peroxide. In terms of biological role, protein-tyrosine-phosphatase that dephosphorylates and probably inhibits MPK6 in non-oxidative stress conditions. In association with MKP1, represses salicylic acid (SA) and camalexin biosynthesis, thus modulating defense response. May also repress MPK3. Dephosphorylates and inactivates MPK4 in vitro. This is Protein-tyrosine-phosphatase PTP1 (PTP1) from Arabidopsis thaliana (Mouse-ear cress).